We begin with the raw amino-acid sequence, 305 residues long: tRNA dimethylallyltransferase (305 aa).

8-15 provides a ligand contact to ATP; sequence GPTAIGKS. 10–15 lines the substrate pocket; sequence TAIGKS. Residues 33-36 form an interaction with substrate tRNA region; it reads DSMA.

The protein belongs to the IPP transferase family. In terms of assembly, monomer. Mg(2+) is required as a cofactor.

It catalyses the reaction adenosine(37) in tRNA + dimethylallyl diphosphate = N(6)-dimethylallyladenosine(37) in tRNA + diphosphate. Functionally, catalyzes the transfer of a dimethylallyl group onto the adenine at position 37 in tRNAs that read codons beginning with uridine, leading to the formation of N6-(dimethylallyl)adenosine (i(6)A). This Aquifex aeolicus (strain VF5) protein is tRNA dimethylallyltransferase.